The sequence spans 626 residues: Endo-1,3(4)-beta-glucanase xgeA (626 aa).

The first 25 residues, 1 to 25 (MSSSLMRRVGSLAASAIIFPGIAHA), serve as a signal peptide directing secretion. In terms of domain architecture, GH16 spans 33–286 (ESWEGEKILN…WAGGVFGDSG (254 aa)). Asn-61 carries N-linked (GlcNAc...) asparagine glycosylation. Glu-142 acts as the Nucleophile in catalysis. The Proton donor role is filled by Glu-147. Residues 477–494 (ASTDAAAATTPAAEPHPS) show a composition bias toward low complexity. The disordered stretch occupies residues 477 to 533 (ASTDAAAATTPAAEPHPSNAETPADSKSSADAVTAQATKTTIAVNTPNPATDSASSV). The span at 495-533 (NAETPADSKSSADAVTAQATKTTIAVNTPNPATDSASSV) shows a compositional bias: polar residues. Gly-603 carries GPI-anchor amidated glycine lipidation. Positions 604-626 (VGSKVSISASVAIAAFVMLLLVN) are cleaved as a propeptide — removed in mature form.

This sequence belongs to the glycosyl hydrolase 16 family.

It localises to the cell membrane. It carries out the reaction Endohydrolysis of (1-&gt;3)- or (1-&gt;4)-linkages in beta-D-glucans when the glucose residue whose reducing group is involved in the linkage to be hydrolyzed is itself substituted at C-3.. In terms of biological role, mixed-linked glucanase involved in the degradation of complex natural cellulosic substrates. Active on laminarin. lichenan, soluble carboxymethyl cellulose but not on pustulan. This Emericella nidulans (strain FGSC A4 / ATCC 38163 / CBS 112.46 / NRRL 194 / M139) (Aspergillus nidulans) protein is Endo-1,3(4)-beta-glucanase xgeA (xgeA).